We begin with the raw amino-acid sequence, 546 residues long: 2-isopropylmalate synthase (546 aa).

One can recognise a Pyruvate carboxyltransferase domain in the interval 8-271 (ILIFDTTLRD…NKFFNRNSDS (264 aa)). Positions 17, 208, 210, and 244 each coordinate Mn(2+). The interval 408 to 546 (QLSLVQVSCG…DKTLLSNPGK (139 aa)) is regulatory domain.

It belongs to the alpha-IPM synthase/homocitrate synthase family. LeuA type 1 subfamily. Homodimer. Mn(2+) serves as cofactor.

It localises to the cytoplasm. The enzyme catalyses 3-methyl-2-oxobutanoate + acetyl-CoA + H2O = (2S)-2-isopropylmalate + CoA + H(+). Its pathway is amino-acid biosynthesis; L-leucine biosynthesis; L-leucine from 3-methyl-2-oxobutanoate: step 1/4. Catalyzes the condensation of the acetyl group of acetyl-CoA with 3-methyl-2-oxobutanoate (2-ketoisovalerate) to form 3-carboxy-3-hydroxy-4-methylpentanoate (2-isopropylmalate). The protein is 2-isopropylmalate synthase of Prochlorococcus marinus (strain MIT 9215).